A 488-amino-acid polypeptide reads, in one-letter code: Rhamnulokinase (488 aa).

11–15 contacts ATP; the sequence is ASSGR. Substrate is bound by residues A79 and 234 to 236; that span reads HDT. Catalysis depends on D235, which acts as the Proton acceptor. T257 provides a ligand contact to ATP. N294 contributes to the substrate binding site. Q302 and G401 together coordinate ATP.

It belongs to the rhamnulokinase family. It depends on Mg(2+) as a cofactor.

It catalyses the reaction L-rhamnulose + ATP = L-rhamnulose 1-phosphate + ADP + H(+). Its pathway is carbohydrate degradation; L-rhamnose degradation; glycerone phosphate from L-rhamnose: step 2/3. Involved in the catabolism of L-rhamnose (6-deoxy-L-mannose). Catalyzes the transfer of the gamma-phosphate group from ATP to the 1-hydroxyl group of L-rhamnulose to yield L-rhamnulose 1-phosphate. The polypeptide is Rhamnulokinase (Lactiplantibacillus plantarum (strain ATCC BAA-793 / NCIMB 8826 / WCFS1) (Lactobacillus plantarum)).